The following is a 233-amino-acid chain: Uracil-DNA glycosylase (233 aa).

The Proton acceptor role is filled by Asp70.

This sequence belongs to the uracil-DNA glycosylase (UDG) superfamily. UNG family.

The protein resides in the cytoplasm. It carries out the reaction Hydrolyzes single-stranded DNA or mismatched double-stranded DNA and polynucleotides, releasing free uracil.. Excises uracil residues from the DNA which can arise as a result of misincorporation of dUMP residues by DNA polymerase or due to deamination of cytosine. In Helicobacter pylori (strain P12), this protein is Uracil-DNA glycosylase.